The following is a 155-amino-acid chain: SsrA-binding protein (155 aa).

Belongs to the SmpB family.

It localises to the cytoplasm. Its function is as follows. Required for rescue of stalled ribosomes mediated by trans-translation. Binds to transfer-messenger RNA (tmRNA), required for stable association of tmRNA with ribosomes. tmRNA and SmpB together mimic tRNA shape, replacing the anticodon stem-loop with SmpB. tmRNA is encoded by the ssrA gene; the 2 termini fold to resemble tRNA(Ala) and it encodes a 'tag peptide', a short internal open reading frame. During trans-translation Ala-aminoacylated tmRNA acts like a tRNA, entering the A-site of stalled ribosomes, displacing the stalled mRNA. The ribosome then switches to translate the ORF on the tmRNA; the nascent peptide is terminated with the 'tag peptide' encoded by the tmRNA and targeted for degradation. The ribosome is freed to recommence translation, which seems to be the essential function of trans-translation. The sequence is that of SsrA-binding protein from Gloeothece citriformis (strain PCC 7424) (Cyanothece sp. (strain PCC 7424)).